A 219-amino-acid chain; its full sequence is Probable N-acetyltransferase camello (219 aa).

Transmembrane regions (helical) follow at residues 42–62 (FYFIIIVACASIFMCTSSYVL) and 64–84 (LTSLVALLAVGWYGLYLEFHG). Residues 62–218 (LSLTSLVALL…TVIYYRYDIK (157 aa)) form the N-acetyltransferase domain.

The protein belongs to the camello family. At the beginning of gastrulation, expressed in deep cells of the presumptive mesoderm. At later gastrulation stages, expressed at the interface between already involuted and preinvoluted mesoderm. At late neurula and tailbud stages, expressed in the deep mass of cells lying ventrally and laterally to the closed blastopore.

Its subcellular location is the golgi apparatus membrane. In terms of biological role, plays a role in regulation of gastrulation, possibly by controlled reduction of cell adhesion which is necessary for optimal cell motility. In Xenopus laevis (African clawed frog), this protein is Probable N-acetyltransferase camello.